Consider the following 145-residue polypeptide: MKIPIKKLRSNAELPVLQTKHAAGYDVHACLDSNLILEPNKVTLVPTGLSFEIPQEYHFEIRPRSGFSTKNQILIPNSPGTIDSDYRGELMIPLFNLGNIPFVIEHGMRIAQLLIRETHYTNWELVSEFTDTTERGTGGFGSTGH.

Residues 64–66, asparagine 77, 81–83, and methionine 91 each bind substrate; these read RSG and TID.

This sequence belongs to the dUTPase family. Mg(2+) is required as a cofactor.

The enzyme catalyses dUTP + H2O = dUMP + diphosphate + H(+). It functions in the pathway pyrimidine metabolism; dUMP biosynthesis; dUMP from dCTP (dUTP route): step 2/2. This enzyme is involved in nucleotide metabolism: it produces dUMP, the immediate precursor of thymidine nucleotides and it decreases the intracellular concentration of dUTP so that uracil cannot be incorporated into DNA. The sequence is that of Deoxyuridine 5'-triphosphate nucleotidohydrolase from Leptospira borgpetersenii serovar Hardjo-bovis (strain JB197).